The primary structure comprises 132 residues: Small ribosomal subunit protein uS8c (132 aa).

This sequence belongs to the universal ribosomal protein uS8 family. Part of the 30S ribosomal subunit.

The protein resides in the plastid. The protein localises to the chloroplast. One of the primary rRNA binding proteins, it binds directly to 16S rRNA central domain where it helps coordinate assembly of the platform of the 30S subunit. This is Small ribosomal subunit protein uS8c (rps8) from Amborella trichopoda.